Here is a 261-residue protein sequence, read N- to C-terminus: MTHQTHAYHMVNPSPWPLTGALSALLMTSGLAMWFHYNLTLLLTLGMTTNLLTMYQWWRDIIRESTFQGHHTPIVQKGLRYGMILFIISEVFFFAGFFWAFYHSSLAPTPELGGCWPPTGIIPLNPLEVPLLNTSVLLASGVSITWAHHSLMEGNRKHMLQALFITISLGVYFTLLQASEYYETSFTISDGVYGSTFFMATGFHGLHVIIGSTFLIVCFLRQLKYHFTSNHHFGFEAAAWYWHFVDVVWLFLYVSIYWWGS.

Residues methionine 1 to proline 15 lie on the Mitochondrial matrix side of the membrane. Residues tryptophan 16–tryptophan 34 form a helical membrane-spanning segment. Residues phenylalanine 35–threonine 40 lie on the Mitochondrial intermembrane side of the membrane. The chain crosses the membrane as a helical span at residues leucine 41–threonine 66. Residues phenylalanine 67 to threonine 72 lie on the Mitochondrial matrix side of the membrane. A helical transmembrane segment spans residues proline 73 to serine 105. At leucine 106–glutamate 128 the chain is on the mitochondrial intermembrane side. A helical membrane pass occupies residues valine 129 to methionine 152. The Mitochondrial matrix portion of the chain corresponds to glutamate 153–asparagine 155. A helical membrane pass occupies residues arginine 156 to glutamate 183. The Mitochondrial intermembrane portion of the chain corresponds to threonine 184–aspartate 190. The chain crosses the membrane as a helical span at residues glycine 191–leucine 223. Over lysine 224–histidine 232 the chain is Mitochondrial matrix. A helical membrane pass occupies residues phenylalanine 233–isoleucine 256. Topologically, residues tyrosine 257–serine 261 are mitochondrial intermembrane.

Belongs to the cytochrome c oxidase subunit 3 family. As to quaternary structure, component of the cytochrome c oxidase (complex IV, CIV), a multisubunit enzyme composed of 14 subunits. The complex is composed of a catalytic core of 3 subunits MT-CO1, MT-CO2 and MT-CO3, encoded in the mitochondrial DNA, and 11 supernumerary subunits COX4I, COX5A, COX5B, COX6A, COX6B, COX6C, COX7A, COX7B, COX7C, COX8 and NDUFA4, which are encoded in the nuclear genome. The complex exists as a monomer or a dimer and forms supercomplexes (SCs) in the inner mitochondrial membrane with NADH-ubiquinone oxidoreductase (complex I, CI) and ubiquinol-cytochrome c oxidoreductase (cytochrome b-c1 complex, complex III, CIII), resulting in different assemblies (supercomplex SCI(1)III(2)IV(1) and megacomplex MCI(2)III(2)IV(2)).

The protein localises to the mitochondrion inner membrane. It carries out the reaction 4 Fe(II)-[cytochrome c] + O2 + 8 H(+)(in) = 4 Fe(III)-[cytochrome c] + 2 H2O + 4 H(+)(out). Its function is as follows. Component of the cytochrome c oxidase, the last enzyme in the mitochondrial electron transport chain which drives oxidative phosphorylation. The respiratory chain contains 3 multisubunit complexes succinate dehydrogenase (complex II, CII), ubiquinol-cytochrome c oxidoreductase (cytochrome b-c1 complex, complex III, CIII) and cytochrome c oxidase (complex IV, CIV), that cooperate to transfer electrons derived from NADH and succinate to molecular oxygen, creating an electrochemical gradient over the inner membrane that drives transmembrane transport and the ATP synthase. Cytochrome c oxidase is the component of the respiratory chain that catalyzes the reduction of oxygen to water. Electrons originating from reduced cytochrome c in the intermembrane space (IMS) are transferred via the dinuclear copper A center (CU(A)) of subunit 2 and heme A of subunit 1 to the active site in subunit 1, a binuclear center (BNC) formed by heme A3 and copper B (CU(B)). The BNC reduces molecular oxygen to 2 water molecules using 4 electrons from cytochrome c in the IMS and 4 protons from the mitochondrial matrix. This chain is Cytochrome c oxidase subunit 3 (MT-CO3), found in Felis catus (Cat).